A 241-amino-acid polypeptide reads, in one-letter code: Copper transport protein CTR3 (241 aa).

The Lumenal portion of the chain corresponds to 1–41; sequence MNMGGSSSTAAKKATCKISMLWNWYTIDTCFIARSWRNDTK. Residues 42 to 62 form a helical membrane-spanning segment; that stretch reads GKFAGSCIGCFALVVVAQWLT. Topologically, residues 63–159 are cytoplasmic; that stretch reads RFSRQFDVEL…SCCTLITPVD (97 aa). A helical transmembrane segment spans residues 160–180; it reads LYPTFLDHMIRVTIFVLQWGL. The Lumenal segment spans residues 181–182; it reads SY. Residues 183 to 203 form a helical membrane-spanning segment; it reads IIMLLFMYYNGYIIISCLIGA. Topologically, residues 204-241 are cytoplasmic; that stretch reads IVGRFIFCYEPLGSLGANGSAQGTVSYDKESDDRKCCL.

The protein belongs to the copper transporter (Ctr) (TC 1.A.56) family. SLC31A subfamily.

It localises to the cytoplasmic vesicle membrane. Functionally, required for high affinity copper (probably reduced Cu I) transport into the cell. The chain is Copper transport protein CTR3 (CTR3) from Saccharomyces cerevisiae (strain ATCC 204508 / S288c) (Baker's yeast).